We begin with the raw amino-acid sequence, 434 residues long: ATP-dependent protease ATPase subunit HslU (434 aa).

ATP-binding positions include Ile18, 60–65, Asp247, Glu312, and Arg384; that span reads GVGKTE.

Belongs to the ClpX chaperone family. HslU subfamily. A double ring-shaped homohexamer of HslV is capped on each side by a ring-shaped HslU homohexamer. The assembly of the HslU/HslV complex is dependent on binding of ATP.

Its subcellular location is the cytoplasm. In terms of biological role, ATPase subunit of a proteasome-like degradation complex; this subunit has chaperone activity. The binding of ATP and its subsequent hydrolysis by HslU are essential for unfolding of protein substrates subsequently hydrolyzed by HslV. HslU recognizes the N-terminal part of its protein substrates and unfolds these before they are guided to HslV for hydrolysis. This Brucella abortus (strain S19) protein is ATP-dependent protease ATPase subunit HslU.